The chain runs to 476 residues: Glutamate--tRNA ligase (476 aa).

The 'HIGH' region signature appears at 9–19; it reads PSPTGTLHIGT. The 'KMSKS' region motif lies at 248–252; sequence KLSKR. Lys-251 contacts ATP.

This sequence belongs to the class-I aminoacyl-tRNA synthetase family. Glutamate--tRNA ligase type 1 subfamily. As to quaternary structure, monomer.

The protein localises to the cytoplasm. The enzyme catalyses tRNA(Glu) + L-glutamate + ATP = L-glutamyl-tRNA(Glu) + AMP + diphosphate. Its function is as follows. Catalyzes the attachment of glutamate to tRNA(Glu) in a two-step reaction: glutamate is first activated by ATP to form Glu-AMP and then transferred to the acceptor end of tRNA(Glu). This Prochlorococcus marinus (strain MIT 9313) protein is Glutamate--tRNA ligase.